The primary structure comprises 253 residues: MRILLSNDDGVHAPGIQTLAKALREFADVQVVAPDRNRSGASNSLTLESSLRTFTFENGDIAVQMGTPTDCVYLGVNALMRPRPDIVVSGINAGPNLGDDVIYSGTVAAAMEGRHLGFPALAVSLDGHKHYDTAAAVTCSILRALCKEPLRTGRILNINVQDLPLDQIKGIRVTRCGTRHPADQVIPQQDPRGNTLYWIGPPGGKCDAGPGTDFAAVDEGYVSITPLHVDLTAHSAQDVVSDWLNSVGVGTQW.

Residues Asp8, Asp9, Ser39, and Asn92 each contribute to the a divalent metal cation site.

It belongs to the SurE nucleotidase family. A divalent metal cation serves as cofactor.

It is found in the cytoplasm. It catalyses the reaction a ribonucleoside 5'-phosphate + H2O = a ribonucleoside + phosphate. It carries out the reaction a ribonucleoside 3'-phosphate + H2O = a ribonucleoside + phosphate. The enzyme catalyses [phosphate](n) + H2O = [phosphate](n-1) + phosphate + H(+). Functionally, nucleotidase with a broad substrate specificity as it can dephosphorylate various ribo- and deoxyribonucleoside 5'-monophosphates and ribonucleoside 3'-monophosphates with highest affinity to 3'-AMP. Also hydrolyzes polyphosphate (exopolyphosphatase activity) with the preference for short-chain-length substrates (P20-25). Might be involved in the regulation of dNTP and NTP pools, and in the turnover of 3'-mononucleotides produced by numerous intracellular RNases (T1, T2, and F) during the degradation of various RNAs. This is 5'/3'-nucleotidase SurE from Shigella flexneri serotype 5b (strain 8401).